Consider the following 79-residue polypeptide: Protein RALF-like 35 (79 aa).

The N-terminal stretch at 1–29 is a signal peptide; that stretch reads MAAHKMSLTSLFFVSIVIVLSLFSGFGEG. Disulfide bonds link Cys-45-Cys-52 and Cys-66-Cys-72. The N-linked (GlcNAc...) asparagine glycan is linked to Asn-68.

It belongs to the plant rapid alkalinization factor (RALF) family.

The protein localises to the secreted. Cell signaling peptide that may regulate plant stress, growth, and development. Mediates a rapid alkalinization of extracellular space by mediating a transient increase in the cytoplasmic Ca(2+) concentration leading to a calcium-dependent signaling events through a cell surface receptor and a concomitant activation of some intracellular mitogen-activated protein kinases. In Arabidopsis thaliana (Mouse-ear cress), this protein is Protein RALF-like 35.